The following is an 838-amino-acid chain: Periostin (838 aa).

Residues 1-23 (MVPLLPLYALLLLFLCDINPANA) form the signal peptide. Residues 42–96 (GPNVCALQQILGTKKKYFSSCKNWYQGAICGKKTTVLYECCPGYMRMEGMKGCPA) enclose the EMI domain. 5 disulfides stabilise this stretch: Cys46-Cys82, Cys71-Cys335, Cys81-Cys94, Cys210-Cys313, and Cys469-Cys474. Cys62 is subject to S-cysteinyl cysteine. 4 consecutive FAS1 domains span residues 99-232 (PIDH…DRVL), 236-367 (GTSI…DEVL), 370-494 (DSAK…REII), and 498-630 (EKSL…DKLL). N-linked (GlcNAc...) asparagine glycosylation is present at Asn601. The disordered stretch occupies residues 811 to 838 (QGDTPAKKIPANKRVQGPRRRSREGRSQ). Positions 826 to 838 (QGPRRRSREGRSQ) are enriched in basic residues.

As to quaternary structure, homodimer. Interacts with BMP1 and fibronectin. Post-translationally, gamma-carboxylation is controversial. Gamma-carboxyglutamated; gamma-carboxyglutamate residues are formed by vitamin K dependent carboxylation; these residues may be required for binding to calcium. According to a more recent report in human, does not contain vitamin K-dependent gamma-carboxyglutamate residues. As to expression, preferentially expressed in periosteum and periodontal ligament. Also expressed in the developing and adult heart.

The protein localises to the golgi apparatus. Its subcellular location is the secreted. It is found in the extracellular space. It localises to the extracellular matrix. Induces cell attachment and spreading and plays a role in cell adhesion. Enhances incorporation of BMP1 in the fibronectin matrix of connective tissues, and subsequent proteolytic activation of lysyl oxidase LOX. The polypeptide is Periostin (Postn) (Mus musculus (Mouse)).